We begin with the raw amino-acid sequence, 264 residues long: Cancer/testis antigen 55 (264 aa).

The disordered stretch occupies residues 242–264 (SSSGFQDDGGLGRPKRERRSQSI). Over residues 254–264 (RPKRERRSQSI) the composition is skewed to basic residues.

Interacts with GABARAP; this interaction may be important for GABARAP protein stability. Isoform 1 interacts with LAMP2; this interaction may be important for LAMP2 protein stability. In terms of tissue distribution, testis-specific. Expressed in spermatozoa (at protein level).

Its subcellular location is the cytoplasm. It is found in the cytoplasmic vesicle. It localises to the secretory vesicle. The protein resides in the acrosome. The protein localises to the cell projection. Its subcellular location is the cilium. It is found in the flagellum. Its function is as follows. Plays a role in spermatogenesis, possibly acting in the regulation of the autophagy pathway. The chain is Cancer/testis antigen 55 (CT55) from Homo sapiens (Human).